The following is a 138-amino-acid chain: Transcription antitermination protein NusB (138 aa).

This sequence belongs to the NusB family.

Involved in transcription antitermination. Required for transcription of ribosomal RNA (rRNA) genes. Binds specifically to the boxA antiterminator sequence of the ribosomal RNA (rrn) operons. This is Transcription antitermination protein NusB from Limosilactobacillus reuteri (strain DSM 20016) (Lactobacillus reuteri).